Consider the following 249-residue polypeptide: Glucosamine-6-phosphate deaminase 2 (249 aa).

The Proton acceptor; for enolization step role is filled by aspartate 67. Asparagine 136 functions as the For ring-opening step in the catalytic mechanism. The active-site Proton acceptor; for ring-opening step is the histidine 138. Glutamate 143 serves as the catalytic For ring-opening step.

It belongs to the glucosamine/galactosamine-6-phosphate isomerase family. NagB subfamily.

The catalysed reaction is alpha-D-glucosamine 6-phosphate + H2O = beta-D-fructose 6-phosphate + NH4(+). The protein operates within amino-sugar metabolism; N-acetylneuraminate degradation; D-fructose 6-phosphate from N-acetylneuraminate: step 5/5. Catalyzes the reversible isomerization-deamination of glucosamine 6-phosphate (GlcN6P) to form fructose 6-phosphate (Fru6P) and ammonium ion. Required for growth on glucosamine and also provides the majority of GlcN6P deaminase activity during growth on N-acetylglucosamine (GlcNAc). The protein is Glucosamine-6-phosphate deaminase 2 of Bacillus subtilis (strain 168).